Consider the following 180-residue polypeptide: YY1-associated factor 2 (180 aa).

Disordered stretches follow at residues 1 to 24 (MGDK…GYWD), 47 to 120 (GTST…EVTV), and 132 to 180 (EKTK…GESH). A RanBP2-type zinc finger spans residues 19-48 (DEGYWDCSVCTFRNSAEAFKCMMCDVRKGT). Low complexity predominate over residues 62–73 (QQVTQQFVPPTQ). Residues 74-93 (SKKEKKDKVEKEKSEKETTS) are compositionally biased toward basic and acidic residues. The segment covering 95–105 (KNSHKKTRPRL) has biased composition (basic residues). Composition is skewed to low complexity over residues 136 to 156 (SPPA…SSSD) and 163 to 174 (SRSSSPRGEASS). At Ser-167 the chain carries Phosphoserine.

In terms of assembly, interacts with MYC, MYCN, RNF2/RING1B and YY1. Part of the E2F6.com-1 complex in G0 phase composed of E2F6, MGA, MAX, TFDP1, CBX3, BAT8, EUHMTASE1, RING1, RNF2, MBLR, L3MBTL2 and YAF2.

It localises to the nucleus. Its function is as follows. Binds to MYC and inhibits MYC-mediated transactivation. Also binds to MYCN and enhances MYCN-dependent transcriptional activation. Increases calpain 2-mediated proteolysis of YY1 in vitro. Component of the E2F6.com-1 complex, a repressive complex that methylates 'Lys-9' of histone H3, suggesting that it is involved in chromatin-remodeling. This is YY1-associated factor 2 (YAF2) from Homo sapiens (Human).